Here is a 439-residue protein sequence, read N- to C-terminus: Tol-Pal system protein TolB (439 aa).

The signal sequence occupies residues 1–24 (MRNGMRKIIAGVFIFVFLISNLYA).

Belongs to the TolB family. As to quaternary structure, the Tol-Pal system is composed of five core proteins: the inner membrane proteins TolA, TolQ and TolR, the periplasmic protein TolB and the outer membrane protein Pal. They form a network linking the inner and outer membranes and the peptidoglycan layer.

The protein resides in the periplasm. Its function is as follows. Part of the Tol-Pal system, which plays a role in outer membrane invagination during cell division and is important for maintaining outer membrane integrity. The sequence is that of Tol-Pal system protein TolB from Francisella tularensis subsp. tularensis (strain FSC 198).